The sequence spans 416 residues: 2-amino-3-ketobutyrate coenzyme A ligase, mitochondrial (416 aa).

The N-terminal 18 residues, 1–18 (MWASFMWHGALSPGRRAH), are a transit peptide targeting the mitochondrion. Lysine 42 carries the N6-acetyllysine; alternate modification. An N6-succinyllysine; alternate modification is found at lysine 42. 131-132 (CF) serves as a coordination point for pyridoxal 5'-phosphate. Histidine 156 serves as a coordination point for substrate. N6-acetyllysine; alternate is present on lysine 184. The residue at position 184 (lysine 184) is an N6-succinyllysine; alternate. Pyridoxal 5'-phosphate contacts are provided by residues serine 203, 259 to 262 (TLGK), and 292 to 293 (SN). Lysine 262 is modified (N6-(pyridoxal phosphate)lysine). N6-succinyllysine is present on residues lysine 323 and lysine 365. At lysine 380 the chain carries N6-acetyllysine; alternate. N6-succinyllysine; alternate is present on lysine 380. Arginine 386 lines the substrate pocket.

It belongs to the class-II pyridoxal-phosphate-dependent aminotransferase family. Requires pyridoxal 5'-phosphate as cofactor.

The protein localises to the mitochondrion. It localises to the nucleus. It catalyses the reaction glycine + acetyl-CoA = (2S)-2-amino-3-oxobutanoate + CoA. Its pathway is amino-acid degradation; L-threonine degradation via oxydo-reductase pathway; glycine from L-threonine: step 2/2. In terms of biological role, pyridoxal phosphate (PLP) dependent enzyme, which catalyzes the cleavage of 2-amino-3-oxobutanoate to glycine and acetyl-CoA. Catalyzes the second reaction step on the main metabolic degradation pathway for L-threonine. This chain is 2-amino-3-ketobutyrate coenzyme A ligase, mitochondrial (Gcat), found in Mus musculus (Mouse).